Reading from the N-terminus, the 469-residue chain is tRNA modification GTPase MnmE (469 aa).

Residues Arg-38, Glu-95, and Arg-134 each contribute to the (6S)-5-formyl-5,6,7,8-tetrahydrofolate site. Residues 230 to 392 (GIRVALVGPP…LRRGLAALVD (163 aa)) form the TrmE-type G domain. GTP-binding positions include 240–245 (NAGKSS), 259–265 (SAQAGTT), and 284–287 (DTAG). The Mg(2+) site is built by Ser-244 and Thr-265. Lys-468 provides a ligand contact to (6S)-5-formyl-5,6,7,8-tetrahydrofolate.

The protein belongs to the TRAFAC class TrmE-Era-EngA-EngB-Septin-like GTPase superfamily. TrmE GTPase family. In terms of assembly, homodimer. Heterotetramer of two MnmE and two MnmG subunits. K(+) serves as cofactor.

Its subcellular location is the cytoplasm. In terms of biological role, exhibits a very high intrinsic GTPase hydrolysis rate. Involved in the addition of a carboxymethylaminomethyl (cmnm) group at the wobble position (U34) of certain tRNAs, forming tRNA-cmnm(5)s(2)U34. This is tRNA modification GTPase MnmE from Halorhodospira halophila (strain DSM 244 / SL1) (Ectothiorhodospira halophila (strain DSM 244 / SL1)).